The chain runs to 175 residues: Archaemetzincin (175 aa).

Histidine 125 contacts Zn(2+). Glutamate 126 serves as the catalytic Proton acceptor. Zn(2+)-binding residues include histidine 129, histidine 135, cysteine 136, cysteine 141, cysteine 160, and cysteine 163.

It belongs to the peptidase M54 family. In terms of assembly, monomer. It depends on Zn(2+) as a cofactor.

Functionally, probable zinc metalloprotease whose natural substrate is unknown. Does not show endo- or exopeptidase activity against resorufin labeled casein, p-nitroanilide (pNA), amidomethylcoumarin (AMC) (one to three amino acids in length), and hippuryl-aminoacid substrates. The polypeptide is Archaemetzincin (Methanopyrus kandleri (strain AV19 / DSM 6324 / JCM 9639 / NBRC 100938)).